The chain runs to 748 residues: Catalase-peroxidase (748 aa).

The tryptophyl-tyrosyl-methioninium (Trp-Tyr) (with M-264) cross-link spans 92–238 (WHSAGTYRTG…LAAVQMGLIY (147 aa)). H93 (proton acceptor) is an active-site residue. Residues 238 to 264 (YVNPEGPDGNPDPLLAAKDIRDTFGRM) constitute a cross-link (tryptophyl-tyrosyl-methioninium (Tyr-Met) (with W-92)). H279 serves as a coordination point for heme b.

This sequence belongs to the peroxidase family. Peroxidase/catalase subfamily. In terms of assembly, homodimer or homotetramer. The cofactor is heme b. In terms of processing, formation of the three residue Trp-Tyr-Met cross-link is important for the catalase, but not the peroxidase activity of the enzyme.

The enzyme catalyses H2O2 + AH2 = A + 2 H2O. It catalyses the reaction 2 H2O2 = O2 + 2 H2O. In terms of biological role, bifunctional enzyme with both catalase and broad-spectrum peroxidase activity. In Xanthomonas campestris pv. campestris (strain 8004), this protein is Catalase-peroxidase.